A 249-amino-acid polypeptide reads, in one-letter code: MNEAAKTLDGWYVLHDFRKIDWNSWKTVSASEREQMLNEFEALVSKWEGTEKAGKGSHALYSIVGQKADIMIMLLRPTMEELNEIENAFNKSGLAAYMIPTYSYVSVVELSNYLAGDSDEDPYENPYVRSRLYPELPRWKHVCFYPMDKRREGNDNWYMLPMEERKNLMRSHGMIGRGYAGVVKQIISGSVGFDDWEWGVTLFSDDVLQFKKLVYEMRFDEVSARYGEFGSFYVGNILEKERIPAYFHI.

Residues arginine 131, 145–149, histidine 172, glutamine 185, and serine 223 each bind Fe-coproporphyrin III; that span reads YPMDK. Residue tyrosine 145 is part of the active site.

It belongs to the ChdC family. Type 1 subfamily. Fe-coproporphyrin III serves as cofactor.

It catalyses the reaction Fe-coproporphyrin III + 2 H2O2 + 2 H(+) = heme b + 2 CO2 + 4 H2O. It carries out the reaction Fe-coproporphyrin III + H2O2 + H(+) = harderoheme III + CO2 + 2 H2O. The enzyme catalyses harderoheme III + H2O2 + H(+) = heme b + CO2 + 2 H2O. Its pathway is porphyrin-containing compound metabolism; protoheme biosynthesis. Its function is as follows. Involved in coproporphyrin-dependent heme b biosynthesis. Catalyzes the decarboxylation of Fe-coproporphyrin III (coproheme) to heme b (protoheme IX), the last step of the pathway. The reaction occurs in a stepwise manner with a three-propionate intermediate. The polypeptide is Coproheme decarboxylase (Shouchella clausii (strain KSM-K16) (Alkalihalobacillus clausii)).